A 329-amino-acid chain; its full sequence is Replication factor C small subunit (329 aa).

Position 51-58 (51-58 (GPPGTGKT)) interacts with ATP.

This sequence belongs to the activator 1 small subunits family. RfcS subfamily. In terms of assembly, heteromultimer composed of small subunits (RfcS) and large subunits (RfcL).

Its function is as follows. Part of the RFC clamp loader complex which loads the PCNA sliding clamp onto DNA. The chain is Replication factor C small subunit from Staphylothermus marinus (strain ATCC 43588 / DSM 3639 / JCM 9404 / F1).